Here is a 160-residue protein sequence, read N- to C-terminus: Eukaryotic translation initiation factor 5A-1/2 (160 aa).

Over residues 1–12 the composition is skewed to basic and acidic residues; sequence MSDEEHHFESKA. Positions 1-21 are disordered; sequence MSDEEHHFESKADAGASKTYP. A Hypusine modification is found at Lys52.

This sequence belongs to the eIF-5A family. Lys-52 undergoes hypusination, a unique post-translational modification that consists in the addition of a butylamino group from spermidine to lysine side chain, leading to the formation of the unusual amino acid hypusine. eIF-5As are the only known proteins to undergo this modification, which is essential for their function.

Its function is as follows. Translation factor that promotes translation elongation and termination, particularly upon ribosome stalling at specific amino acid sequence contexts. Binds between the exit (E) and peptidyl (P) site of the ribosome and promotes rescue of stalled ribosome: specifically required for efficient translation of polyproline-containing peptides as well as other motifs that stall the ribosome. Acts as a ribosome quality control (RQC) cofactor by joining the RQC complex to facilitate peptidyl transfer during CAT tailing step. This is Eukaryotic translation initiation factor 5A-1/2 (EIF5A1) from Solanum tuberosum (Potato).